The chain runs to 425 residues: Serine--tRNA ligase (425 aa).

An L-serine-binding site is contributed by 232–234 (TSE). ATP contacts are provided by residues 263–265 (RRE) and Val279. Residue Glu286 participates in L-serine binding. Position 350 to 353 (350 to 353 (EVVS)) interacts with ATP. Thr387 is a binding site for L-serine.

Belongs to the class-II aminoacyl-tRNA synthetase family. Type-1 seryl-tRNA synthetase subfamily. In terms of assembly, homodimer. The tRNA molecule binds across the dimer.

It localises to the cytoplasm. It catalyses the reaction tRNA(Ser) + L-serine + ATP = L-seryl-tRNA(Ser) + AMP + diphosphate + H(+). The enzyme catalyses tRNA(Sec) + L-serine + ATP = L-seryl-tRNA(Sec) + AMP + diphosphate + H(+). Its pathway is aminoacyl-tRNA biosynthesis; selenocysteinyl-tRNA(Sec) biosynthesis; L-seryl-tRNA(Sec) from L-serine and tRNA(Sec): step 1/1. Its function is as follows. Catalyzes the attachment of serine to tRNA(Ser). Is also able to aminoacylate tRNA(Sec) with serine, to form the misacylated tRNA L-seryl-tRNA(Sec), which will be further converted into selenocysteinyl-tRNA(Sec). The protein is Serine--tRNA ligase of Methanocella arvoryzae (strain DSM 22066 / NBRC 105507 / MRE50).